A 171-amino-acid polypeptide reads, in one-letter code: Peptide deformylase (171 aa).

Fe cation-binding residues include cysteine 91 and histidine 133. Glutamate 134 is a catalytic residue. Histidine 137 is a binding site for Fe cation.

It belongs to the polypeptide deformylase family. It depends on Fe(2+) as a cofactor.

It carries out the reaction N-terminal N-formyl-L-methionyl-[peptide] + H2O = N-terminal L-methionyl-[peptide] + formate. In terms of biological role, removes the formyl group from the N-terminal Met of newly synthesized proteins. Requires at least a dipeptide for an efficient rate of reaction. N-terminal L-methionine is a prerequisite for activity but the enzyme has broad specificity at other positions. In Edwardsiella ictaluri (strain 93-146), this protein is Peptide deformylase.